The primary structure comprises 144 residues: uncharacterized protein (144 aa).

A helical transmembrane segment spans residues 72–90; sequence VAIGTSLIVGAGVAMEVSV.

It to yeast YCL21w.

The protein localises to the membrane. This is an uncharacterized protein from Saccharomyces cerevisiae (strain ATCC 204508 / S288c) (Baker's yeast).